The chain runs to 617 residues: Proline--tRNA ligase (617 aa).

Belongs to the class-II aminoacyl-tRNA synthetase family. ProS type 1 subfamily. As to quaternary structure, homodimer.

The protein resides in the cytoplasm. It catalyses the reaction tRNA(Pro) + L-proline + ATP = L-prolyl-tRNA(Pro) + AMP + diphosphate. In terms of biological role, catalyzes the attachment of proline to tRNA(Pro) in a two-step reaction: proline is first activated by ATP to form Pro-AMP and then transferred to the acceptor end of tRNA(Pro). As ProRS can inadvertently accommodate and process non-cognate amino acids such as alanine and cysteine, to avoid such errors it has two additional distinct editing activities against alanine. One activity is designated as 'pretransfer' editing and involves the tRNA(Pro)-independent hydrolysis of activated Ala-AMP. The other activity is designated 'posttransfer' editing and involves deacylation of mischarged Ala-tRNA(Pro). The misacylated Cys-tRNA(Pro) is not edited by ProRS. The chain is Proline--tRNA ligase from Streptococcus pneumoniae (strain ATCC BAA-255 / R6).